A 424-amino-acid chain; its full sequence is Hemagglutinin-esterase (424 aa).

An N-terminal signal peptide occupies residues methionine 1–serine 16. The esterase domain 1 stretch occupies residues phenylalanine 7–glycine 127. Topologically, residues leucine 17–isoleucine 392 are virion surface. Catalysis depends on serine 40, which acts as the Nucleophile. Cysteines 44 and 65 form a disulfide. Residues asparagine 54, asparagine 89, asparagine 153, asparagine 236, and asparagine 301 are each glycosylated (N-linked (GlcNAc...) asparagine; by host). Intrachain disulfides connect cysteine 113-cysteine 162, cysteine 197-cysteine 276, and cysteine 205-cysteine 249. The segment at leucine 128–leucine 266 is receptor binding. Positions leucine 267 to threonine 379 are esterase domain 2. Residues cysteine 307 and cysteine 312 are joined by a disulfide bond. Asparagine 316 is a glycosylation site (N-linked (GlcNAc...) asparagine; by host). Active-site charge relay system residues include aspartate 326 and histidine 329. Cysteines 347 and 371 form a disulfide. N-linked (GlcNAc...) asparagine; by host glycosylation occurs at asparagine 358. Residues isoleucine 393–phenylalanine 413 form a helical membrane-spanning segment. Over methionine 414–alanine 424 the chain is Intravirion. Asparagine 417 carries an N-linked (GlcNAc...) asparagine; by host glycan.

The protein belongs to the influenza type C/coronaviruses hemagglutinin-esterase family. In terms of assembly, homodimer; disulfide-linked. Forms a complex with the M protein in the pre-Golgi. Associates then with S-M complex to form a ternary complex S-M-HE. Post-translationally, N-glycosylated in the host RER.

Its subcellular location is the virion membrane. It localises to the host cell membrane. It carries out the reaction N-acetyl-9-O-acetylneuraminate + H2O = N-acetylneuraminate + acetate + H(+). The catalysed reaction is N-acetyl-4-O-acetylneuraminate + H2O = N-acetylneuraminate + acetate + H(+). Functionally, structural protein that makes short spikes at the surface of the virus. Contains receptor binding and receptor-destroying activities. Mediates de-O-acetylation of N-acetyl-4-O-acetylneuraminic acid, which is probably the receptor determinant recognized by the virus on the surface of erythrocytes and susceptible cells. This receptor-destroying activity is important for virus release as it probably helps preventing self-aggregation and ensures the efficient spread of the progeny virus from cell to cell. May serve as a secondary viral attachment protein for initiating infection, the spike protein being the major one. May become a target for both the humoral and the cellular branches of the immune system. The polypeptide is Hemagglutinin-esterase (Bos taurus (Bovine)).